Reading from the N-terminus, the 251-residue chain is NADPH-dependent oxidoreductase (251 aa).

The protein belongs to the flavin oxidoreductase frp family. FMN serves as cofactor.

Reduces FMN, organic nitro compounds and disulfide DTNB. Involved in maintenance of the cellular redox state and the disulfide stress response. This chain is NADPH-dependent oxidoreductase (nfrA), found in Staphylococcus aureus (strain USA300).